We begin with the raw amino-acid sequence, 614 residues long: Acetylcholinesterase (614 aa).

The N-terminal stretch at methionine 1 to alanine 31 is a signal peptide. Cysteine 100 and cysteine 127 are disulfide-bonded. Serine 234 (acyl-ester intermediate) is an active-site residue. An intrachain disulfide couples cysteine 288 to cysteine 303. A glycan (N-linked (GlcNAc...) asparagine) is linked at asparagine 296. Catalysis depends on glutamate 365, which acts as the Charge relay system. N-linked (GlcNAc...) asparagine glycosylation occurs at asparagine 381. Cysteine 440 and cysteine 560 are oxidised to a cystine. Histidine 478 serves as the catalytic Charge relay system. An N-linked (GlcNAc...) asparagine glycan is attached at asparagine 495.

The protein belongs to the type-B carboxylesterase/lipase family. Homotetramer; composed of disulfide-linked homodimers. Catalytic forms H (GPI-anchor dimer) and T (asymmetric collagen-tailed), which differ in their C-terminus, account for all types of known ACHE forms. Interacts with PRIMA1. The interaction with PRIMA1 is required to anchor it to the basal lamina of cells and organize into tetramers. Has been found in central nervous system and muscle. Found in embryonic liver and spleen but not in adult liver.

It is found in the synapse. It localises to the secreted. The protein localises to the cell membrane. The enzyme catalyses acetylcholine + H2O = choline + acetate + H(+). In terms of biological role, terminates signal transduction at the neuromuscular junction by rapid hydrolysis of the acetylcholine released into the synaptic cleft. The sequence is that of Acetylcholinesterase (Ache) from Rattus norvegicus (Rat).